Reading from the N-terminus, the 426-residue chain is Putative phosphate permease TC_0064 (426 aa).

11 helical membrane-spanning segments follow: residues 1-21 (MWWL…NIGA), 37-57 (LTLR…AVVL), 83-103 (VFGM…ASFF), 104-124 (GWPV…GIIL), 140-160 (VSWL…FSFI), 183-203 (AIII…ARVV), 207-227 (VAFR…IWGV), 260-280 (LVVE…MSFA), 309-329 (VLFI…ATWG), 365-385 (FGFP…VGLA), and 399-419 (IVLS…MFFL).

This sequence belongs to the inorganic phosphate transporter (PiT) (TC 2.A.20) family.

The protein resides in the cell membrane. In terms of biological role, potential transporter for phosphate. This chain is Putative phosphate permease TC_0064, found in Chlamydia muridarum (strain MoPn / Nigg).